A 371-amino-acid chain; its full sequence is Histidinol-phosphate aminotransferase (371 aa).

The residue at position 228 (Lys-228) is an N6-(pyridoxal phosphate)lysine.

The protein belongs to the class-II pyridoxal-phosphate-dependent aminotransferase family. Histidinol-phosphate aminotransferase subfamily. Pyridoxal 5'-phosphate serves as cofactor.

The catalysed reaction is L-histidinol phosphate + 2-oxoglutarate = 3-(imidazol-4-yl)-2-oxopropyl phosphate + L-glutamate. The protein operates within amino-acid biosynthesis; L-histidine biosynthesis; L-histidine from 5-phospho-alpha-D-ribose 1-diphosphate: step 7/9. This is Histidinol-phosphate aminotransferase from Methanococcus maripaludis (strain C6 / ATCC BAA-1332).